We begin with the raw amino-acid sequence, 38 residues long: Photosystem II reaction center protein L (38 aa).

The chain crosses the membrane as a helical span at residues 17–37; it reads SLFWGLLLIFVLAVLFSSYFF.

The protein belongs to the PsbL family. In terms of assembly, PSII is composed of 1 copy each of membrane proteins PsbA, PsbB, PsbC, PsbD, PsbE, PsbF, PsbH, PsbI, PsbJ, PsbK, PsbL, PsbM, PsbT, PsbX, PsbY, PsbZ, Psb30/Ycf12, at least 3 peripheral proteins of the oxygen-evolving complex and a large number of cofactors. It forms dimeric complexes.

It localises to the plastid. The protein resides in the chloroplast thylakoid membrane. In terms of biological role, one of the components of the core complex of photosystem II (PSII). PSII is a light-driven water:plastoquinone oxidoreductase that uses light energy to abstract electrons from H(2)O, generating O(2) and a proton gradient subsequently used for ATP formation. It consists of a core antenna complex that captures photons, and an electron transfer chain that converts photonic excitation into a charge separation. This subunit is found at the monomer-monomer interface and is required for correct PSII assembly and/or dimerization. This chain is Photosystem II reaction center protein L, found in Zygnema circumcarinatum (Green alga).